We begin with the raw amino-acid sequence, 275 residues long: Exosome complex component Rrp42 (275 aa).

It belongs to the RNase PH family. Rrp42 subfamily. Component of the archaeal exosome complex. Forms a hexameric ring-like arrangement composed of 3 Rrp41-Rrp42 heterodimers. The hexameric ring associates with a trimer of Rrp4 and/or Csl4 subunits.

Its subcellular location is the cytoplasm. In terms of biological role, non-catalytic component of the exosome, which is a complex involved in RNA degradation. Contributes to the structuring of the Rrp41 active site. This chain is Exosome complex component Rrp42, found in Saccharolobus islandicus (strain Y.N.15.51 / Yellowstone #2) (Sulfolobus islandicus).